Here is a 195-residue protein sequence, read N- to C-terminus: Imidazoleglycerol-phosphate dehydratase (195 aa).

The protein belongs to the imidazoleglycerol-phosphate dehydratase family.

Its subcellular location is the cytoplasm. The enzyme catalyses D-erythro-1-(imidazol-4-yl)glycerol 3-phosphate = 3-(imidazol-4-yl)-2-oxopropyl phosphate + H2O. The protein operates within amino-acid biosynthesis; L-histidine biosynthesis; L-histidine from 5-phospho-alpha-D-ribose 1-diphosphate: step 6/9. This chain is Imidazoleglycerol-phosphate dehydratase, found in Campylobacter curvus (strain 525.92).